A 110-amino-acid chain; its full sequence is Small ribosomal subunit protein bS18c (110 aa).

The protein belongs to the bacterial ribosomal protein bS18 family. In terms of assembly, part of the 30S ribosomal subunit.

It is found in the plastid. Its subcellular location is the chloroplast. This Pisum sativum (Garden pea) protein is Small ribosomal subunit protein bS18c (rps18).